The chain runs to 259 residues: Taurine import ATP-binding protein TauB (259 aa).

The ABC transporter domain maps to 4–233 (LELERISAQY…RYAAGESARA (230 aa)). 38–45 (GPSGSGKT) provides a ligand contact to ATP.

This sequence belongs to the ABC transporter superfamily. Taurine importer (TC 3.A.1.17.1) family. As to quaternary structure, the complex is composed of two ATP-binding proteins (TauB), two transmembrane proteins (TauC) and a solute-binding protein (TauA).

Its subcellular location is the cell inner membrane. It carries out the reaction taurine(out) + ATP + H2O = taurine(in) + ADP + phosphate + H(+). Its function is as follows. Part of the ABC transporter complex TauABC involved in taurine import. Responsible for energy coupling to the transport system. The protein is Taurine import ATP-binding protein TauB of Pseudomonas entomophila (strain L48).